The following is a 118-amino-acid chain: Late cornified envelope protein 1F (118 aa).

The span at 1–10 (MSCQQSQQQC) shows a compositional bias: low complexity. Disordered stretches follow at residues 1–23 (MSCQ…CPPK) and 82–118 (RRRS…GGCC). Positions 11–23 (QPPPKCTPKCPPK) are enriched in pro residues. The span at 95–104 (CCSQPSAGSS) shows a compositional bias: low complexity. Positions 105-118 (CCGGGSGQHSGGCC) are enriched in gly residues.

It belongs to the LCE family. In terms of tissue distribution, skin-specific. Expression was readily detected in adult trunk skin, adult arm skin, fetal skin, penal skin, vulva, esophagus and tongue. Not expressed in the cervix, rectum, lung, colon, or placenta. Expression is observed in the fibroblasts.

Functionally, precursors of the cornified envelope of the stratum corneum. The chain is Late cornified envelope protein 1F (LCE1F) from Homo sapiens (Human).